The following is a 313-amino-acid chain: Probable pyridoxal 5'-phosphate synthase subunit PDX1.2 (313 aa).

D42 is a D-ribose 5-phosphate binding site. K99 acts as the Schiff-base intermediate with D-ribose 5-phosphate in catalysis. G171 contacts D-ribose 5-phosphate. R183 provides a ligand contact to D-glyceraldehyde 3-phosphate. Residues G232 and 253–254 (GS) each bind D-ribose 5-phosphate.

The protein belongs to the PdxS/SNZ family.

It carries out the reaction aldehydo-D-ribose 5-phosphate + D-glyceraldehyde 3-phosphate + L-glutamine = pyridoxal 5'-phosphate + L-glutamate + phosphate + 3 H2O + H(+). It functions in the pathway cofactor biosynthesis; pyridoxal 5'-phosphate biosynthesis. Functionally, catalyzes the formation of pyridoxal 5'-phosphate from ribose 5-phosphate (RBP), glyceraldehyde 3-phosphate (G3P) and ammonia. The ammonia is provided by PDX2. Can also use ribulose 5-phosphate and dihydroxyacetone phosphate as substrates, resulting from enzyme-catalyzed isomerization of RBP and G3P, respectively. Also plays an indirect role in resistance to singlet oxygen-generating photosensitizers. This Oryza sativa subsp. japonica (Rice) protein is Probable pyridoxal 5'-phosphate synthase subunit PDX1.2 (PDX12).